The following is a 90-amino-acid chain: Small ribosomal subunit protein bS20 (90 aa).

Residues 1–11 are compositionally biased toward basic and acidic residues; that stretch reads MANIKSSEKDI. Disordered regions lie at residues 1-29 and 69-90; these read MANI…SRLR and SKNA…SAAA.

This sequence belongs to the bacterial ribosomal protein bS20 family.

Functionally, binds directly to 16S ribosomal RNA. This is Small ribosomal subunit protein bS20 from Leptospira borgpetersenii serovar Hardjo-bovis (strain L550).